The primary structure comprises 508 residues: H/ACA ribonucleoprotein complex subunit 4 (508 aa).

The interval 1–29 (MADVEVRKEKKKKKIKEEPLDGDDIGTLQ) is disordered. Aspartate 123 functions as the Nucleophile in the catalytic mechanism. In terms of domain architecture, PUA spans 294-369 (HKRIIMKDSS…VVAKIKRVIM (76 aa)). Residues 423–508 (AAQEVSPTNG…KDRDRDEAQE (86 aa)) are disordered. Serine 442 carries the post-translational modification Phosphoserine. Positions 442–457 (STSSVEETAAAAVSEE) are enriched in low complexity. Threonine 443 is subject to Phosphothreonine. Phosphoserine is present on residues serine 444 and serine 445. Threonine 449 is modified (phosphothreonine). Phosphoserine is present on serine 455. Threonine 458 carries the post-translational modification Phosphothreonine. Over residues 475–485 (EAPEAAEEEAE) the composition is skewed to acidic residues. The span at 499–508 (KDRDRDEAQE) shows a compositional bias: basic and acidic residues.

The protein belongs to the pseudouridine synthase TruB family. Component of the box H/ACA small nucleolar ribonucleoprotein (H/ACA snoRNP) complex consisting of Nop60B, Gar1, NPH2 and Nop10, and associated with H/ACA-type snoRNAs. In terms of tissue distribution, expressed at higher levels in females than in males. Expressed almost exclusively in females with high levels of expression in the ovary.

The protein resides in the nucleus. Its subcellular location is the nucleolus. The enzyme catalyses a uridine in RNA = a pseudouridine in RNA. Catalytic subunit of the box H/ACA small nucleolar ribonucleoprotein (H/ACA snoRNP) complex, which catalyzes pseudouridylation of rRNA. This involves the isomerization of uridine such that the ribose is subsequently attached to C5, instead of the normal N1. Pseudouridine ('psi') residues may serve to stabilize the conformation of rRNAs. Required for ribosome biogenesis; plays a central role in ribosomal RNA processing. H/ACA snoRNP complex-dependent ribosome biogenesis is important in female germline cell differentiation during oogenesis. Essential for viability and female fertility. Required for maintenance of the germline stem cell lineage during spermatogenesis. The sequence is that of H/ACA ribonucleoprotein complex subunit 4 from Drosophila melanogaster (Fruit fly).